We begin with the raw amino-acid sequence, 723 residues long: Choline transporter-like protein 4 (723 aa).

The Cytoplasmic segment spans residues Met1–Asp36. Residues Ile37–Ala57 form a helical membrane-spanning segment. The Extracellular portion of the chain corresponds to Trp58 to Trp245. Asn71, Asn202, Asn211, and Asn219 each carry an N-linked (GlcNAc...) asparagine glycan. A helical membrane pass occupies residues Gln246 to Leu266. Over Arg267–Thr269 the chain is Cytoplasmic. Residues Ala270 to Trp290 form a helical membrane-spanning segment. Topologically, residues Tyr291–Trp325 are extracellular. A glycan (N-linked (GlcNAc...) asparagine) is linked at Asn303. Residues Leu326–Leu346 traverse the membrane as a helical segment. The Cytoplasmic segment spans residues Arg347–Pro374. A helical transmembrane segment spans residues Val375–Leu395. Topologically, residues Ala396–Asn464 are extracellular. Asn409, Asn421, and Asn430 each carry an N-linked (GlcNAc...) asparagine glycan. The helical transmembrane segment at Val465–Gly485 threads the bilayer. Topologically, residues Ala486–His516 are cytoplasmic. The chain crosses the membrane as a helical span at residues Val517–Leu537. Residues Glu538–Tyr578 are Extracellular-facing. Residues Ile579–Leu599 form a helical membrane-spanning segment. Topologically, residues Met600 to Leu615 are cytoplasmic. A helical membrane pass occupies residues Leu616–Phe636. The Extracellular segment spans residues Ser637 to Tyr655. Residues Trp656 to Val676 form a helical membrane-spanning segment. The Cytoplasmic portion of the chain corresponds to Tyr677–Gly723.

It belongs to the CTL (choline transporter-like) family.

The protein resides in the membrane. The protein localises to the apical cell membrane. The enzyme catalyses choline(out) + n H(+)(in) = choline(in) + n H(+)(out). It catalyses the reaction thiamine diphosphate(out) = thiamine diphosphate(in). Choline transporter that seems to play a role in the choline-acetylcholine system and is required to the efferent innervation of hair cells in the olivocochlear bundle for the maintenance of physiological function of outer hair cells and the protection of hair cells from acoustic injury. Also described as a thiamine pyrophosphate transporter. The sequence is that of Choline transporter-like protein 4 (slc44a4) from Danio rerio (Zebrafish).